A 649-amino-acid polypeptide reads, in one-letter code: ABC transporter G family member 5 (649 aa).

The region spanning Val-42–Leu-284 is the ABC transporter domain. Position 80–87 (Gly-80–Ser-87) interacts with ATP. Positions Ser-308 to Gly-336 are disordered. Positions Glu-371–Phe-581 constitute an ABC transmembrane type-2 domain. 6 consecutive transmembrane segments (helical) span residues Leu-390–His-410, Leu-425–Leu-445, Leu-474–Leu-494, Leu-506–Val-526, Phe-529–Tyr-549, and Val-617–Cys-637.

This sequence belongs to the ABC transporter superfamily. ABCG family. Eye pigment precursor importer (TC 3.A.1.204) subfamily.

The protein resides in the membrane. This Arabidopsis thaliana (Mouse-ear cress) protein is ABC transporter G family member 5 (ABCG5).